The sequence spans 201 residues: 3-isopropylmalate dehydratase small subunit (201 aa).

This sequence belongs to the LeuD family. LeuD type 1 subfamily. Heterodimer of LeuC and LeuD.

The catalysed reaction is (2R,3S)-3-isopropylmalate = (2S)-2-isopropylmalate. The protein operates within amino-acid biosynthesis; L-leucine biosynthesis; L-leucine from 3-methyl-2-oxobutanoate: step 2/4. Catalyzes the isomerization between 2-isopropylmalate and 3-isopropylmalate, via the formation of 2-isopropylmaleate. The chain is 3-isopropylmalate dehydratase small subunit from Ruegeria sp. (strain TM1040) (Silicibacter sp.).